Here is a 226-residue protein sequence, read N- to C-terminus: UPF0173 metal-dependent hydrolase Dgeo_0136 (226 aa).

The protein belongs to the UPF0173 family.

In Deinococcus geothermalis (strain DSM 11300 / CIP 105573 / AG-3a), this protein is UPF0173 metal-dependent hydrolase Dgeo_0136.